A 154-amino-acid chain; its full sequence is Myoglobin (154 aa).

Residues 2 to 148 enclose the Globin domain; sequence GLSDGEWQLV…FRNDIAAKYK (147 aa). Ser-4 is modified (phosphoserine). Residue His-65 coordinates nitrite. His-65 is an O2 binding site. Thr-68 is subject to Phosphothreonine. Residue His-94 coordinates heme b.

The protein belongs to the globin family. As to quaternary structure, monomeric.

The protein localises to the cytoplasm. Its subcellular location is the sarcoplasm. It catalyses the reaction Fe(III)-heme b-[protein] + nitric oxide + H2O = Fe(II)-heme b-[protein] + nitrite + 2 H(+). The catalysed reaction is H2O2 + AH2 = A + 2 H2O. Functionally, monomeric heme protein which primary function is to store oxygen and facilitate its diffusion within muscle tissues. Reversibly binds oxygen through a pentacoordinated heme iron and enables its timely and efficient release as needed during periods of heightened demand. Depending on the oxidative conditions of tissues and cells, and in addition to its ability to bind oxygen, it also has a nitrite reductase activity whereby it regulates the production of bioactive nitric oxide. Under stress conditions, like hypoxia and anoxia, it also protects cells against reactive oxygen species thanks to its pseudoperoxidase activity. The polypeptide is Myoglobin (MB) (Lutra lutra (European river otter)).